A 654-amino-acid chain; its full sequence is Acetyl-coenzyme A synthetase (654 aa).

CoA-binding positions include 190–193 (RGGK) and T313. ATP contacts are provided by residues 389–391 (GEP), 413–418 (DTWWQT), D504, and R519. A CoA-binding site is contributed by S527. R530 lines the ATP pocket. Mg(2+) is bound by residues V541 and V546. At K613 the chain carries N6-acetyllysine.

It belongs to the ATP-dependent AMP-binding enzyme family. Mg(2+) serves as cofactor. In terms of processing, acetylated. Deacetylation by the SIR2-homolog deacetylase activates the enzyme.

The catalysed reaction is acetate + ATP + CoA = acetyl-CoA + AMP + diphosphate. Its function is as follows. Catalyzes the conversion of acetate into acetyl-CoA (AcCoA), an essential intermediate at the junction of anabolic and catabolic pathways. AcsA undergoes a two-step reaction. In the first half reaction, AcsA combines acetate with ATP to form acetyl-adenylate (AcAMP) intermediate. In the second half reaction, it can then transfer the acetyl group from AcAMP to the sulfhydryl group of CoA, forming the product AcCoA. The chain is Acetyl-coenzyme A synthetase from Leptospira borgpetersenii serovar Hardjo-bovis (strain L550).